A 388-amino-acid polypeptide reads, in one-letter code: Calcium-binding and spermatid-specific protein 1 (388 aa).

Residues 1–20 are disordered; it reads MAEDGLPKIYSHPPAESTKT. At Thr280 the chain carries Phosphothreonine; by CK2. A phosphoserine mark is found at Ser312 and Ser344.

Its subcellular location is the cytoplasm. The protein localises to the mitochondrion inner membrane. It is found in the cell projection. The protein resides in the cilium. It localises to the flagellum. Its subcellular location is the cytoplasmic vesicle. The protein localises to the secretory vesicle. It is found in the acrosome. Calcium-binding protein. Essential for maintaining the structural integrity of the sperm flagella. This chain is Calcium-binding and spermatid-specific protein 1 (CABS1), found in Bos taurus (Bovine).